We begin with the raw amino-acid sequence, 110 residues long: Large ribosomal subunit protein uL22 (110 aa).

Belongs to the universal ribosomal protein uL22 family. In terms of assembly, part of the 50S ribosomal subunit.

Functionally, this protein binds specifically to 23S rRNA; its binding is stimulated by other ribosomal proteins, e.g. L4, L17, and L20. It is important during the early stages of 50S assembly. It makes multiple contacts with different domains of the 23S rRNA in the assembled 50S subunit and ribosome. Its function is as follows. The globular domain of the protein is located near the polypeptide exit tunnel on the outside of the subunit, while an extended beta-hairpin is found that lines the wall of the exit tunnel in the center of the 70S ribosome. This Stutzerimonas stutzeri (strain A1501) (Pseudomonas stutzeri) protein is Large ribosomal subunit protein uL22.